An 80-amino-acid polypeptide reads, in one-letter code: UPF0270 protein ASA_3305 (80 aa).

Belongs to the UPF0270 family.

The polypeptide is UPF0270 protein ASA_3305 (Aeromonas salmonicida (strain A449)).